Consider the following 939-residue polypeptide: Translation initiation factor IF-2 (939 aa).

2 disordered regions span residues 51 to 81 (LGTK…GGKK) and 137 to 353 (VTNK…EMKA). A compositionally biased stretch (basic and acidic residues) spans 181–210 (NEKKAGAPEIKRAEHTETVEKSKTAVDSKK). Residues 259-277 (PVNRSPRPSTPSPNRSAGG) are compositionally biased toward low complexity. Positions 300 to 312 (RRDEKPAERDSRP) are enriched in basic and acidic residues. Positions 437 to 606 (GRCPVVTVMG…QLAAEMLELK (170 aa)) constitute a tr-type G domain. Positions 446-453 (GHVDHGKT) are G1. 446–453 (GHVDHGKT) contributes to the GTP binding site. The segment at 471-475 (GITQH) is G2. Residues 492-495 (DTPG) are G3. GTP-binding positions include 492–496 (DTPGH) and 546–549 (NKID). A G4 region spans residues 546–549 (NKID). The G5 stretch occupies residues 582–584 (SAK).

The protein belongs to the TRAFAC class translation factor GTPase superfamily. Classic translation factor GTPase family. IF-2 subfamily.

Its subcellular location is the cytoplasm. One of the essential components for the initiation of protein synthesis. Protects formylmethionyl-tRNA from spontaneous hydrolysis and promotes its binding to the 30S ribosomal subunits. Also involved in the hydrolysis of GTP during the formation of the 70S ribosomal complex. The sequence is that of Translation initiation factor IF-2 from Desulfotalea psychrophila (strain LSv54 / DSM 12343).